The chain runs to 298 residues: GTP cyclohydrolase FolE2 (298 aa).

It belongs to the GTP cyclohydrolase IV family.

It catalyses the reaction GTP + H2O = 7,8-dihydroneopterin 3'-triphosphate + formate + H(+). Its pathway is cofactor biosynthesis; 7,8-dihydroneopterin triphosphate biosynthesis; 7,8-dihydroneopterin triphosphate from GTP: step 1/1. Converts GTP to 7,8-dihydroneopterin triphosphate. The chain is GTP cyclohydrolase FolE2 from Neisseria meningitidis serogroup A / serotype 4A (strain DSM 15465 / Z2491).